The following is a 222-amino-acid chain: MSTSSSASALGRRAGPLDGLIGEIDRALRVLSGAATAARPYPAQAPEAPDALSERERRHAAGLMRVNHVGEVCAQALYRGQAAACREPAARELLRQAAAEEVDHLAWCNERLRELGSRPSLLNPFWYTGSFALGVLASYAGVPRNLGFMAETERQVEAHLDGHLRTLPVQDRRSRDIVQKMKEDEAQHRASAERAGGVPLPAPVRGAMRAMSKVMTSTAYWL.

Fe cation is bound by residues Glu71, Glu101, His104, Glu153, Glu185, and His188.

The protein belongs to the COQ7 family. Fe cation serves as cofactor.

The protein localises to the cell membrane. It catalyses the reaction a 5-methoxy-2-methyl-3-(all-trans-polyprenyl)benzene-1,4-diol + AH2 + O2 = a 3-demethylubiquinol + A + H2O. It participates in cofactor biosynthesis; ubiquinone biosynthesis. Functionally, catalyzes the hydroxylation of 2-nonaprenyl-3-methyl-6-methoxy-1,4-benzoquinol during ubiquinone biosynthesis. This is 3-demethoxyubiquinol 3-hydroxylase from Bordetella bronchiseptica (strain ATCC BAA-588 / NCTC 13252 / RB50) (Alcaligenes bronchisepticus).